The primary structure comprises 301 residues: uncharacterized protein (301 aa).

Positions 1 to 28 are cleaved as a signal peptide; the sequence is MFFREDKSVAFRLRSAALSGCATGQSDA.

This is an uncharacterized protein from Treponema pallidum (strain Nichols).